The following is a 402-amino-acid chain: GTPase Obg (402 aa).

The Obg domain occupies 1–159 (MRFIDEAIVT…KELKFELKVV (159 aa)). An OBG-type G domain is found at 160–334 (ADVGLIGLPN…VKYHLMNEIE (175 aa)). GTP contacts are provided by residues 166 to 173 (GLPNAGKS), 191 to 195 (FTTLV), 213 to 216 (DIPG), 283 to 286 (NKID), and 315 to 317 (STL). Residues Ser173 and Thr193 each contribute to the Mg(2+) site. Positions 382-402 (AAFNNELDDDDDDGVEVVYAP) are disordered. Over residues 387-396 (ELDDDDDDGV) the composition is skewed to acidic residues.

Belongs to the TRAFAC class OBG-HflX-like GTPase superfamily. OBG GTPase family. Monomer. Mg(2+) is required as a cofactor.

It localises to the cytoplasm. An essential GTPase which binds GTP, GDP and possibly (p)ppGpp with moderate affinity, with high nucleotide exchange rates and a fairly low GTP hydrolysis rate. Plays a role in control of the cell cycle, stress response, ribosome biogenesis and in those bacteria that undergo differentiation, in morphogenesis control. This Psychrobacter sp. (strain PRwf-1) protein is GTPase Obg.